A 467-amino-acid polypeptide reads, in one-letter code: DNA methyltransferase 1-associated protein 1 (467 aa).

Composition is skewed to basic and acidic residues over residues 1-11 (MATGADVRDIL) and 26-48 (SKKDIINPDKKKSKKSSETLTFK). The segment at 1 to 48 (MATGADVRDILELGGPEGDAASGTISKKDIINPDKKKSKKSSETLTFK) is disordered. Residue Lys27 forms a Glycyl lysine isopeptide (Lys-Gly) (interchain with G-Cter in SUMO2) linkage. In terms of domain architecture, SANT spans 149-199 (DDAWTKAETDHLFDLSRRFDLRFVVIHDRYDHQQFKKRSVEDLKERYYHIC). Lys214 participates in a covalent cross-link: Glycyl lysine isopeptide (Lys-Gly) (interchain with G-Cter in SUMO2). The stretch at 225–275 (RRKEQLERLYNRTPEQVAEEEYLLQELRKIEARKKEREKRSQDLQKLITAA) forms a coiled coil. Over residues 258-267 (KKEREKRSQD) the composition is skewed to basic and acidic residues. 2 disordered regions span residues 258-305 (KKER…PAVP) and 404-467 (LGGP…AKKP). A compositionally biased stretch (low complexity) spans 406 to 422 (GPATPASGPGPASAEPA). The residue at position 445 (Thr445) is a Phosphothreonine. Ser448 carries the phosphoserine modification.

In terms of assembly, component of the NuA4 histone acetyltransferase complex which contains the catalytic subunit KAT5/TIP60 and the subunits EP400, TRRAP/PAF400, BRD8/SMAP, EPC1, DMAP1/DNMAP1, RUVBL1/TIP49, RUVBL2, ING3, actin, ACTL6A/BAF53A, MORF4L1/MRG15, MORF4L2/MRGX, MRGBP, YEATS4/GAS41, VPS72/YL1 and MEAF6. Component of a NuA4-related complex which contains EP400, TRRAP/PAF400, SRCAP, BRD8/SMAP, EPC1, DMAP1/DNMAP1, RUVBL1/TIP49, RUVBL2, actin, ACTL6A/BAF53A, VPS72 and YEATS4/GAS41. DMAP1 also forms a complex with DNMT1 and HDAC2. Throughout S phase it interacts directly with the N-terminus of DNMT1, which serves to recruit DMAP1 to replication foci. DMAP1 interacts with ING1, a component of the mSin3A transcription repressor complex, although this interaction is not required for recruitment of ING1 to heterochromatin. Interacts directly with the transcriptional corepressor TSG101. Interacts with the pro-apoptotic protein DAXX. Interacts with URI1.

The protein resides in the nucleus. The protein localises to the cytoplasm. Involved in transcription repression and activation. Its interaction with HDAC2 may provide a mechanism for histone deacetylation in heterochromatin following replication of DNA at late firing origins. Can also repress transcription independently of histone deacetylase activity. May specifically potentiate DAXX-mediated repression of glucocorticoid receptor-dependent transcription. Component of the NuA4 histone acetyltransferase (HAT) complex which is involved in transcriptional activation of select genes principally by acetylation of nucleosomal histones H4 and H2A. This modification may both alter nucleosome - DNA interactions and promote interaction of the modified histones with other proteins which positively regulate transcription. This complex may be required for the activation of transcriptional programs associated with oncogene and proto-oncogene mediated growth induction, tumor suppressor mediated growth arrest and replicative senescence, apoptosis, and DNA repair. NuA4 may also play a direct role in DNA repair when recruited to sites of DNA damage. Participates in the nuclear localization of URI1 and increases its transcriptional corepressor activity. This is DNA methyltransferase 1-associated protein 1 (DMAP1) from Homo sapiens (Human).